Reading from the N-terminus, the 214-residue chain is Threonylcarbamoyl-AMP synthase (214 aa).

The YrdC-like domain occupies 9-214 (TDSTIQAATW…GDALTGQVIR (206 aa)).

Belongs to the SUA5 family. TsaC subfamily.

The protein localises to the cytoplasm. The catalysed reaction is L-threonine + hydrogencarbonate + ATP = L-threonylcarbamoyladenylate + diphosphate + H2O. Functionally, required for the formation of a threonylcarbamoyl group on adenosine at position 37 (t(6)A37) in tRNAs that read codons beginning with adenine. Catalyzes the conversion of L-threonine, HCO(3)(-)/CO(2) and ATP to give threonylcarbamoyl-AMP (TC-AMP) as the acyladenylate intermediate, with the release of diphosphate. The sequence is that of Threonylcarbamoyl-AMP synthase from Psychrobacter cryohalolentis (strain ATCC BAA-1226 / DSM 17306 / VKM B-2378 / K5).